The following is a 366-amino-acid chain: UDP-N-acetylglucosamine--N-acetylmuramyl-(pentapeptide) pyrophosphoryl-undecaprenol N-acetylglucosamine transferase (366 aa).

Residues 10-12 (TGG), Asn-124, Arg-166, Ser-196, and Gln-296 each bind UDP-N-acetyl-alpha-D-glucosamine.

It belongs to the glycosyltransferase 28 family. MurG subfamily.

The protein localises to the cell membrane. It carries out the reaction di-trans,octa-cis-undecaprenyl diphospho-N-acetyl-alpha-D-muramoyl-L-alanyl-D-glutamyl-meso-2,6-diaminopimeloyl-D-alanyl-D-alanine + UDP-N-acetyl-alpha-D-glucosamine = di-trans,octa-cis-undecaprenyl diphospho-[N-acetyl-alpha-D-glucosaminyl-(1-&gt;4)]-N-acetyl-alpha-D-muramoyl-L-alanyl-D-glutamyl-meso-2,6-diaminopimeloyl-D-alanyl-D-alanine + UDP + H(+). It participates in cell wall biogenesis; peptidoglycan biosynthesis. Cell wall formation. Catalyzes the transfer of a GlcNAc subunit on undecaprenyl-pyrophosphoryl-MurNAc-pentapeptide (lipid intermediate I) to form undecaprenyl-pyrophosphoryl-MurNAc-(pentapeptide)GlcNAc (lipid intermediate II). The chain is UDP-N-acetylglucosamine--N-acetylmuramyl-(pentapeptide) pyrophosphoryl-undecaprenol N-acetylglucosamine transferase from Alkaliphilus oremlandii (strain OhILAs) (Clostridium oremlandii (strain OhILAs)).